Consider the following 136-residue polypeptide: MERTLVILKPDSVKRKLVGEIISRFEKRNFTILHLKMMNIDRELACEHYSHVKDKPFFNDMIDYITSGPVVVMVLSGYRVIEAVRSMVGATSNFDSKPGTIRGDYGYHRFENLIHASDSCESAEIEIKRFFPELDS.

ATP contacts are provided by Lys9, Phe57, Arg85, Thr91, Arg102, and Asn112. The active-site Pros-phosphohistidine intermediate is His115.

It belongs to the NDK family. As to quaternary structure, homotetramer. It depends on Mg(2+) as a cofactor.

Its subcellular location is the cytoplasm. It catalyses the reaction a 2'-deoxyribonucleoside 5'-diphosphate + ATP = a 2'-deoxyribonucleoside 5'-triphosphate + ADP. The catalysed reaction is a ribonucleoside 5'-diphosphate + ATP = a ribonucleoside 5'-triphosphate + ADP. In terms of biological role, major role in the synthesis of nucleoside triphosphates other than ATP. The ATP gamma phosphate is transferred to the NDP beta phosphate via a ping-pong mechanism, using a phosphorylated active-site intermediate. This chain is Nucleoside diphosphate kinase, found in Acetivibrio thermocellus (strain ATCC 27405 / DSM 1237 / JCM 9322 / NBRC 103400 / NCIMB 10682 / NRRL B-4536 / VPI 7372) (Clostridium thermocellum).